Consider the following 154-residue polypeptide: MIINNLQEFYRLLLPNAPLISIDYGSKKIGIAISNQERNIAMPLNIITEASKKAIIASLLEKIEQYKACGIVIGLPIDMSGMQTEQSAIVIKFAEELTKSINLPIYLQDERLTTKAANNFLKSFGIKRKERNNNDDAVAASMILETVLNSINKL.

This sequence belongs to the YqgF nuclease family.

The protein localises to the cytoplasm. Could be a nuclease involved in processing of the 5'-end of pre-16S rRNA. This Rickettsia bellii (strain OSU 85-389) protein is Putative pre-16S rRNA nuclease.